Reading from the N-terminus, the 551-residue chain is MAVRVPLGCTGSFCPRLLPLLALLELLVDPSLGRVHHLALKDDVRHKVHLNTFGFFKDGYMVVNISSLSVNEPEGVKDKDTEIGFSLDRTKNDGFSSYLDEDVNYCILKKKSMSSVTLLILDISGSGVKVRSPPEAGKQLPEIVFSKDEKVPSRSQEPAVSSNPKDSKVQRTPDGSKAQRSTVDSKTIAEKFFSIHKNDGAVSFQFFFNISTSDQEGLYSLYFHKCPSSKLRSGEQVSFSLNIDITEKNPDSYLSAGEIPLPKLYVSMALLFFLSGTVWIHILRKRRNDVFKIHWLMAALPFTKSLSLVFHAIDYHYISSQGFPIEGWAVVYYITHLLKGALLFITIALIGTGWAFIKHILSDKDKKIFMIVIPLQVLANVAYIIIESTEEGTTEYGLWKDSLFLVDLLCCGAILFPVVWSIRHLQEASATDGKAAINLAKLKLFRHYYVLIVCYIYFTRIIAFLLKFAVPFQWKWLYQLLDETATLVFFVLTGYKFRPASDNPYLQLSQEEDDLEMESVVTTSGVMENMKKVKKVSNGAVEPQGSWEGTA.

The N-terminal stretch at Met1–Gly33 is a signal peptide. Residues Arg34–Pro262 are Extracellular-facing. Asn64 carries N-linked (GlcNAc...) asparagine glycosylation. Residues Gly127–Val183 are disordered. Residues Ser153–Pro164 show a composition bias toward polar residues. An N-linked (GlcNAc...) asparagine glycan is attached at Asn209. Residues Lys263 to Leu283 form a helical membrane-spanning segment. Residues Arg284 to Lys292 are Cytoplasmic-facing. The chain crosses the membrane as a helical span at residues Ile293 to Ile313. The Extracellular portion of the chain corresponds to Asp314–His336. Residues Leu337–Ile357 traverse the membrane as a helical segment. Residues Lys358–Lys367 lie on the Cytoplasmic side of the membrane. A helical transmembrane segment spans residues Ile368 to Ser388. The Extracellular segment spans residues Thr389–Asp401. The chain crosses the membrane as a helical span at residues Ser402–Ile422. The Cytoplasmic segment spans residues Arg423–Lys443. Residues Leu444–Leu466 traverse the membrane as a helical segment. At Lys467–Lys475 the chain is on the extracellular side. The chain crosses the membrane as a helical span at residues Trp476–Tyr495. Over Lys496–Ala551 the chain is Cytoplasmic.

This sequence belongs to the LU7TM family. In terms of processing, cleaved by FURIN to yield two fragments that remain associated via a disulfide bond. As to expression, widely expressed. Not detected in the duodenum, nor in the exocrine pancreas.

It localises to the cell membrane. It is found in the golgi apparatus. The protein localises to the trans-Golgi network membrane. Functionally, has been proposed to act as a receptor for neuronostatin, a peptide derived from the somatostatin/SST precursor. Involved in blood sugar regulation through the induction of glucagon in response to low glucose. The protein is Protein GPR107 (Gpr107) of Rattus norvegicus (Rat).